Reading from the N-terminus, the 501-residue chain is Putative lon protease homolog (501 aa).

53–60 (GPPGIGKS) is an ATP binding site. A compositionally biased stretch (polar residues) spans 481 to 494 (SSSQRMSQHGYSSE). Residues 481-501 (SSSQRMSQHGYSSENIDRSYM) form a disordered region.

It belongs to the peptidase S16 family.

This chain is Putative lon protease homolog, found in Methanothermobacter thermautotrophicus (strain ATCC 29096 / DSM 1053 / JCM 10044 / NBRC 100330 / Delta H) (Methanobacterium thermoautotrophicum).